The primary structure comprises 381 residues: Sulfate adenylyltransferase (381 aa).

Belongs to the sulfate adenylyltransferase family.

It carries out the reaction sulfate + ATP + H(+) = adenosine 5'-phosphosulfate + diphosphate. It functions in the pathway sulfur metabolism; hydrogen sulfide biosynthesis; sulfite from sulfate: step 1/3. The polypeptide is Sulfate adenylyltransferase (Carboxydothermus hydrogenoformans (strain ATCC BAA-161 / DSM 6008 / Z-2901)).